The primary structure comprises 708 residues: MDMEKTFNLTRRDDGIAILTMDVPGETMNTLRSEFGPEISDVLAEIKADTSIKGLVLVSGKKDSFVAGADISMLDACETATDAKQLSQQGHVVFNELESLPIPVVAAINGACLGGGLELALACHKRVCSLNPKTMMGVPEVQLGLLPGGGGTQRLPRLVGVTTALDMMLTGKQLRPKQALKMGLVDDAVPESILLRTAVEMALAGKRPAKKKHQSFFNKVLEGTSAGRNIIFDQAGKQVAKKTQGNYPAPAKIIDCVRQGMTKGMAKGLEVEASHFADLVMSKESGAMRSVFFATTEMKKETGAGDVEPQKVNKVMVLGGGLMGGGIASVTTTKAKIPARVKDISETGLSNALAYAYKLLDKGVKRRHMTPAVRDNLMALMTTTTEYKGIKDADIVVEAVFEDLALKHQMVKDVERECGEHTIFASNTSSLPIGQIAEAASRPENVIGLHYFSPVEKMPLVEVIAHEKTSAETIATTVAFAKKQGKTPIVVQDGAGFYVNRILALYMNEAAQLLLEGQSVEHLDKALIKFGFPVGPMTLLDEVGIDVGAKISPILEKELGERFKAPTAFDKLLADDRKGRKNGKGFYLYGGKKKAKEVDQTVYSVLGLKPGVDTEATEVAQRCVVQMLNEAVRCLEESIIACPRDGDIGAIFGIGFPPFLGGPFHYIDTLGAANLVKILENYQSRYGSRFEPAAKLKQMAEEGTRFFS.

The enoyl-CoA hydratase stretch occupies residues 1-190; the sequence is MDMEKTFNLT…KMGLVDDAVP (190 aa). A 3-hydroxyacyl-CoA dehydrogenase region spans residues 310-708; that stretch reads QKVNKVMVLG…MAEEGTRFFS (399 aa).

It in the N-terminal section; belongs to the enoyl-CoA hydratase/isomerase family. This sequence in the central section; belongs to the 3-hydroxyacyl-CoA dehydrogenase family. As to quaternary structure, heterotetramer of two alpha chains (FadJ) and two beta chains (FadI).

The protein resides in the cytoplasm. It catalyses the reaction a (3S)-3-hydroxyacyl-CoA = a (2E)-enoyl-CoA + H2O. The catalysed reaction is a 4-saturated-(3S)-3-hydroxyacyl-CoA = a (3E)-enoyl-CoA + H2O. It carries out the reaction a (3S)-3-hydroxyacyl-CoA + NAD(+) = a 3-oxoacyl-CoA + NADH + H(+). The enzyme catalyses (3S)-3-hydroxybutanoyl-CoA = (3R)-3-hydroxybutanoyl-CoA. The protein operates within lipid metabolism; fatty acid beta-oxidation. Catalyzes the formation of a hydroxyacyl-CoA by addition of water on enoyl-CoA. Also exhibits 3-hydroxyacyl-CoA epimerase and 3-hydroxyacyl-CoA dehydrogenase activities. In Shewanella halifaxensis (strain HAW-EB4), this protein is Fatty acid oxidation complex subunit alpha.